The sequence spans 267 residues: Membrane-spanning 4-domains subfamily A member 12 (267 aa).

At 1-91 (MMSSKPTSHA…MNFKEEAKAL (91 aa)) the chain is on the cytoplasmic side. A helical transmembrane segment spans residues 92-112 (GVIQIMVGLMHIGFGIVLCLI). The Extracellular portion of the chain corresponds to 113 to 120 (SFSFREVL). Residues 121 to 141 (GFASTAVIGGYPFWGGLSFII) form a helical membrane-spanning segment. Residues 142–160 (SGSLSVSASKELSRCLVKG) lie on the Cytoplasmic side of the membrane. The chain crosses the membrane as a helical span at residues 161-181 (SLGMNIVSSILAFIGVILLLV). At 182–200 (DMCINGVAGQDYWAVLSGK) the chain is on the extracellular side. Residues 201–221 (GISATLMIFSLLEFFVACATA) form a helical membrane-spanning segment. At 222 to 267 (HFANQANTTTNMSVLVIPNMYESNPVTPASSSAPPRCNNYSANAPK) the chain is on the cytoplasmic side. A disordered region spans residues 248 to 267 (TPASSSAPPRCNNYSANAPK).

Belongs to the MS4A family.

The protein resides in the membrane. Its function is as follows. May be involved in signal transduction as a component of a multimeric receptor complex. The sequence is that of Membrane-spanning 4-domains subfamily A member 12 (MS4A12) from Homo sapiens (Human).